The following is a 544-amino-acid chain: MAAKQVLFSDEARAKMLDGVNTLANAVKVTLGPKGRNVVLDKSFGAPTITKDGVSVAKEIELEDKFENMGAQIVKEVASKTADVAGDGTTTATVLAQALLTEGLKAVTAGMNPMDLKRGIDKATARLVEELKALSKPCSDPKSIEQVGTISANSDATVGKLIADAMAKVGKEGVITVEEGKGFEDELDVVEGMQFDRGYLSPYFATNQENMTTDLENPYILIVDKKISNIRDLLPILEGVSKSGRALLIIAEDVESEALATLVVNNMRGVVKVCAVKAPGFGDRRKAMLEDIATLTGATFVSEDLSMKLEETNMEHLGTASRVQVTKDNTTIIDGAGEKEAIAKRINVIKANIAEANSDYDREKLQERLAKLSGGVAVIKVGAVTEAEMKEKKDRVDDALHATRAAVEEGIVAGGGVALIRAQKALDGLTGENDDQNHGIALLRKAIEAPLRQIVSNAGGESSVVVNQVKANQGNYGYNAANDTYGDMVEMGILDPTKVTRSALQHAASIAGLMITTEAMIGEIKEAAPAMPMGGGMGGMPGMM.

Residues 30–33 (TLGP), lysine 51, 87–91 (DGTTT), glycine 415, 479–481 (NAA), and aspartate 495 contribute to the ATP site.

Belongs to the chaperonin (HSP60) family. In terms of assembly, forms a cylinder of 14 subunits composed of two heptameric rings stacked back-to-back. Interacts with the co-chaperonin GroES.

The protein localises to the cytoplasm. It carries out the reaction ATP + H2O + a folded polypeptide = ADP + phosphate + an unfolded polypeptide.. In terms of biological role, together with its co-chaperonin GroES, plays an essential role in assisting protein folding. The GroEL-GroES system forms a nano-cage that allows encapsulation of the non-native substrate proteins and provides a physical environment optimized to promote and accelerate protein folding. This Francisella tularensis subsp. holarctica (strain FTNF002-00 / FTA) protein is Chaperonin GroEL.